The primary structure comprises 80 residues: MTTANVEQKVKNIIADQLGVGEDEIKITSSFIEDLGADSLDIVELVMAMEEEFEVEIPDEEAENIKTVQDAVNYITTHKK.

One can recognise a Carrier domain in the interval 4 to 79; sequence ANVEQKVKNI…DAVNYITTHK (76 aa). At serine 39 the chain carries O-(pantetheine 4'-phosphoryl)serine.

Belongs to the acyl carrier protein (ACP) family. In terms of processing, 4'-phosphopantetheine is transferred from CoA to a specific serine of apo-ACP by AcpS. This modification is essential for activity because fatty acids are bound in thioester linkage to the sulfhydryl of the prosthetic group.

It localises to the cytoplasm. The protein operates within lipid metabolism; fatty acid biosynthesis. Its function is as follows. Carrier of the growing fatty acid chain in fatty acid biosynthesis. This Anaeromyxobacter sp. (strain Fw109-5) protein is Acyl carrier protein.